The primary structure comprises 149 residues: MFDIGFTELIVIGIVALVVVGPERLPKVARAAGHLYGRMQRYVSTVRSDISREMQLDEMRRVGQDFKQSVESAASGVEQQASVVDDYLRGEVDMLDKSVRNEPQNAQTPPQTADAEPAQPDVRQQTLPLEEPDQNRAAGEPSSTSTRPA.

Residues 1–21 (MFDIGFTELIVIGIVALVVVG) traverse the membrane as a helical segment. A disordered region spans residues 92–149 (VDMLDKSVRNEPQNAQTPPQTADAEPAQPDVRQQTLPLEEPDQNRAAGEPSSTSTRPA). Over residues 101 to 111 (NEPQNAQTPPQ) the composition is skewed to polar residues.

This sequence belongs to the TatB family. In terms of assembly, the Tat system comprises two distinct complexes: a TatABC complex, containing multiple copies of TatA, TatB and TatC subunits, and a separate TatA complex, containing only TatA subunits. Substrates initially bind to the TatABC complex, which probably triggers association of the separate TatA complex to form the active translocon.

It is found in the cell inner membrane. Part of the twin-arginine translocation (Tat) system that transports large folded proteins containing a characteristic twin-arginine motif in their signal peptide across membranes. Together with TatC, TatB is part of a receptor directly interacting with Tat signal peptides. TatB may form an oligomeric binding site that transiently accommodates folded Tat precursor proteins before their translocation. This is Sec-independent protein translocase protein TatB from Thiobacillus denitrificans (strain ATCC 25259 / T1).